Reading from the N-terminus, the 154-residue chain is 17.7 kDa class I heat shock protein (154 aa).

The sHSP domain maps to 40–154 (ETSAFANTRI…PDVKSIEISG (115 aa)).

It belongs to the small heat shock protein (HSP20) family. Forms oligomeric structures.

It is found in the cytoplasm. In Solanum peruvianum (Peruvian tomato), this protein is 17.7 kDa class I heat shock protein.